The chain runs to 466 residues: Phytase A (466 aa).

A signal peptide spans 1–19; that stretch reads MGVFVVLLSIATLFGSTSG. Asn27 is a glycosylation site (N-linked (GlcNAc...) asparagine). Cys31 and Cys40 are joined by a disulfide. 1D-myo-inositol hexakisphosphate contacts are provided by Tyr51, Arg81, His82, Arg85, and Thr88. Cystine bridges form between Cys71-Cys414, Cys215-Cys465, Cys264-Cys282, and Cys436-Cys444. His82 acts as the Nucleophile in catalysis. Residues Asn105 and Asn120 are each glycosylated (N-linked (GlcNAc...) asparagine). Residue Arg165 participates in 1D-myo-inositol hexakisphosphate binding. 2 N-linked (GlcNAc...) asparagine glycosylation sites follow: Asn207 and Asn230. A 1D-myo-inositol hexakisphosphate-binding site is contributed by Lys301. 2 N-linked (GlcNAc...) asparagine glycosylation sites follow: Asn339 and Asn352. His361 and Asp362 together coordinate 1D-myo-inositol hexakisphosphate. A glycan (N-linked (GlcNAc...) asparagine) is linked at Asn376.

The protein belongs to the histidine acid phosphatase family. As to quaternary structure, monomer.

The protein resides in the secreted. The catalysed reaction is 1D-myo-inositol hexakisphosphate + H2O = 1D-myo-inositol 1,2,4,5,6-pentakisphosphate + phosphate. The enzyme catalyses 1D-myo-inositol 1,2,4,5,6-pentakisphosphate + H2O = 1D-myo-inositol 1,2,5,6-tetrakisphosphate + phosphate. It carries out the reaction 1D-myo-inositol 1,2,5,6-tetrakisphosphate + H2O = 1D-myo-inositol 1,2,6-trisphosphate + phosphate. It catalyses the reaction 1D-myo-inositol 1,2,6-trisphosphate + H2O = 1D-myo-inositol 1,2-bisphosphate + phosphate. The catalysed reaction is 1D-myo-inositol 1,2-bisphosphate + H2O = 1D-myo-inositol 2-phosphate + phosphate. In terms of biological role, catalyzes the phosphate monoester hydrolysis of phytic acid (myo-inositol hexakisphosphate), which results in the stepwise formation of myo-inositol pentakis-, tetrakis-, tris-, bis-, and monophosphates, as well as the liberation of inorganic phosphate. Myo-inositol 2-monophosphate is the end product. Has a broad substrate specificity and is also able to dephosphorylate other classic acid phosphatase substrates such as p-nitrophenyl phosphate, phenyl phosphate, fructose 1,6-bisphosphate, glucose 6-phosphate, 3-phosphoglycerate, as well as ADP and ATP. The protein is Phytase A of Aspergillus terreus.